A 228-amino-acid chain; its full sequence is Ribose-5-phosphate isomerase A (228 aa).

Residues 29–32, 85–88, and 98–101 contribute to the substrate site; these read TGST, DGAD, and KGGG. Residue Glu107 is the Proton acceptor of the active site. Lys125 provides a ligand contact to substrate.

The protein belongs to the ribose 5-phosphate isomerase family. Homodimer.

The enzyme catalyses aldehydo-D-ribose 5-phosphate = D-ribulose 5-phosphate. Its pathway is carbohydrate degradation; pentose phosphate pathway; D-ribose 5-phosphate from D-ribulose 5-phosphate (non-oxidative stage): step 1/1. Catalyzes the reversible conversion of ribose-5-phosphate to ribulose 5-phosphate. This Staphylococcus aureus (strain COL) protein is Ribose-5-phosphate isomerase A.